Here is a 493-residue protein sequence, read N- to C-terminus: Guanosine-5'-triphosphate,3'-diphosphate pyrophosphatase (493 aa).

This sequence belongs to the GppA/Ppx family. GppA subfamily.

The catalysed reaction is guanosine 3'-diphosphate 5'-triphosphate + H2O = guanosine 3',5'-bis(diphosphate) + phosphate + H(+). The protein operates within purine metabolism; ppGpp biosynthesis; ppGpp from GTP: step 2/2. Functionally, catalyzes the conversion of pppGpp to ppGpp. Guanosine pentaphosphate (pppGpp) is a cytoplasmic signaling molecule which together with ppGpp controls the 'stringent response', an adaptive process that allows bacteria to respond to amino acid starvation, resulting in the coordinated regulation of numerous cellular activities. The sequence is that of Guanosine-5'-triphosphate,3'-diphosphate pyrophosphatase from Salmonella dublin (strain CT_02021853).